The primary structure comprises 174 residues: N5-carboxyaminoimidazole ribonucleotide mutase (174 aa).

Substrate contacts are provided by serine 16, aspartate 19, and arginine 46.

The protein belongs to the AIR carboxylase family. Class I subfamily.

The enzyme catalyses 5-carboxyamino-1-(5-phospho-D-ribosyl)imidazole + H(+) = 5-amino-1-(5-phospho-D-ribosyl)imidazole-4-carboxylate. It functions in the pathway purine metabolism; IMP biosynthesis via de novo pathway; 5-amino-1-(5-phospho-D-ribosyl)imidazole-4-carboxylate from 5-amino-1-(5-phospho-D-ribosyl)imidazole (N5-CAIR route): step 2/2. Functionally, catalyzes the conversion of N5-carboxyaminoimidazole ribonucleotide (N5-CAIR) to 4-carboxy-5-aminoimidazole ribonucleotide (CAIR). The sequence is that of N5-carboxyaminoimidazole ribonucleotide mutase from Mycobacterium tuberculosis (strain CDC 1551 / Oshkosh).